Here is a 69-residue protein sequence, read N- to C-terminus: U-scoloptoxin(21)-Sm2a (69 aa).

Residues 1-21 form the signal peptide; that stretch reads MFFLGFIIVCASEEQSDNRLP. The interval 46–69 is disordered; the sequence is ANDPNGPGRRRRSPIVREEILRHP. The span at 60 to 69 shows a compositional bias: basic and acidic residues; that stretch reads IVREEILRHP.

Belongs to the scoloptoxin-21 family. In terms of tissue distribution, expressed by the venom gland.

The protein localises to the secreted. The protein is U-scoloptoxin(21)-Sm2a of Scolopendra morsitans (Tanzanian blue ringleg centipede).